Consider the following 379-residue polypeptide: Flagellin A (379 aa).

2 coiled-coil regions span residues 103–128 (TNSA…RIAE) and 302–341 (YVDS…IKDT).

Belongs to the bacterial flagellin family. Heteromer of multiple flagellin subunits including FlaA, FlaB, FlaC, FlaD and possibly FlaE.

It is found in the secreted. The protein resides in the bacterial flagellum. Flagellin is the subunit protein which polymerizes to form the filaments of bacterial flagella. FlaA is essential for flagellar synthesis and full motility. Important for virulence at two different levels: is needed for crossing the fish integument and may play a role once the bacterium has entered the host. This chain is Flagellin A (flaA), found in Vibrio anguillarum (Listonella anguillarum).